A 283-amino-acid chain; its full sequence is UPF0273 protein STK_18300 (283 aa).

The 246-residue stretch at 4–249 folds into the KaiC domain; it reads LRVRTYIPGF…YLRITNVKAE (246 aa). 31–38 lines the ATP pocket; the sequence is GGPGTGKS. Residues 261–283 form a disordered region; sequence MKKAVEESEEEKESIQEAEIEEE. A compositionally biased stretch (acidic residues) spans 267–283; that stretch reads ESEEEKESIQEAEIEEE.

This sequence belongs to the UPF0273 family.

The polypeptide is UPF0273 protein STK_18300 (Sulfurisphaera tokodaii (strain DSM 16993 / JCM 10545 / NBRC 100140 / 7) (Sulfolobus tokodaii)).